The chain runs to 232 residues: Homeobox protein Rhox13 (232 aa).

Positions glutamine 45–valine 114 are disordered. A compositionally biased stretch (acidic residues) spans serine 68–glutamate 105. Residues arginine 148–glutamate 207 constitute a DNA-binding region (homeobox).

The protein belongs to the paired-like homeobox family.

It is found in the nucleus. In terms of biological role, probable transcription factor. The chain is Homeobox protein Rhox13 from Mus musculus (Mouse).